The chain runs to 284 residues: Nucleotide-binding protein Teth39_0666 (284 aa).

8-15 (GLSGAGKT) contributes to the ATP binding site. Residue 58-61 (DLRG) participates in GTP binding.

It belongs to the RapZ-like family.

Its function is as follows. Displays ATPase and GTPase activities. The polypeptide is Nucleotide-binding protein Teth39_0666 (Thermoanaerobacter pseudethanolicus (strain ATCC 33223 / 39E) (Clostridium thermohydrosulfuricum)).